Reading from the N-terminus, the 205-residue chain is Proteasome subunit beta type-3 (205 aa).

Position 31 is a phosphoserine (S31). A Glycyl lysine isopeptide (Lys-Gly) (interchain with G-Cter in ubiquitin) cross-link involves residue K70.

Belongs to the peptidase T1B family. The 26S proteasome consists of a 20S proteasome core and two 19S regulatory subunits. The 20S proteasome core is composed of 28 subunits that are arranged in four stacked rings, resulting in a barrel-shaped structure. The two end rings are each formed by seven alpha subunits, and the two central rings are each formed by seven beta subunits. The catalytic chamber with the active sites is on the inside of the barrel.

The protein localises to the cytoplasm. Its subcellular location is the nucleus. In terms of biological role, non-catalytic component of the proteasome which degrades poly-ubiquitinated proteins in the cytoplasm and in the nucleus. It is essential for the regulated turnover of proteins and for the removal of misfolded proteins. The proteasome is a multicatalytic proteinase complex that is characterized by its ability to cleave peptides with Arg, Phe, Tyr, Leu, and Glu adjacent to the leaving group at neutral or slightly basic pH. It has an ATP-dependent proteolytic activity. This subunit may participate in the trypsin-like activity of the enzyme complex. The polypeptide is Proteasome subunit beta type-3 (PUP3) (Saccharomyces cerevisiae (strain ATCC 204508 / S288c) (Baker's yeast)).